We begin with the raw amino-acid sequence, 249 residues long: BPI fold-containing family A member 1 (249 aa).

Residues 1–15 form the signal peptide; sequence MFQVAGLIVFCGLLA. Residues 81 to 86 are important for surfactant activity and antibacterial properties; that stretch reads LLGGLL. Residue asparagine 151 is glycosylated (N-linked (GlcNAc...) asparagine). An intrachain disulfide couples cysteine 173 to cysteine 217.

This sequence belongs to the BPI/LBP/Plunc superfamily. Plunc family. As to quaternary structure, monomer. Interacts (via N-terminus) with SCNN1B, a subunit of the heterotrimeric epithelial sodium channel (ENaC); this inhibits proteolytic activation of ENaC. In terms of tissue distribution, expressed in lung and trachea.

It localises to the secreted. Its function is as follows. Lipid-binding protein which shows high specificity for the surfactant phospholipid dipalmitoylphosphatidylcholine (DPPC). Plays a role in the innate immune responses of the upper airways. Reduces the surface tension in secretions from airway epithelia and inhibits the formation of biofilm by pathogenic Gram-negative bacteria, such as P.aeruginosa and K.pneumoniae. Negatively regulates proteolytic cleavage of SCNN1G, an event that is required for activation of the epithelial sodium channel (ENaC), and thereby contributes to airway surface liquid homeostasis and proper clearance of mucus. Plays a role in the airway inflammatory response after exposure to irritants. May attract macrophages and neutrophils. The polypeptide is BPI fold-containing family A member 1 (BPIFA1) (Sus scrofa (Pig)).